The primary structure comprises 46 residues: Cuticle protein 4.9 (46 aa).

Its function is as follows. Component of the cuticle of migratory locust which contains more than 100 different structural proteins. The protein is Cuticle protein 4.9 of Locusta migratoria (Migratory locust).